The following is a 341-amino-acid chain: Phosphoribosylformylglycinamidine cyclo-ligase (341 aa).

Belongs to the AIR synthase family.

Its subcellular location is the cytoplasm. The enzyme catalyses 2-formamido-N(1)-(5-O-phospho-beta-D-ribosyl)acetamidine + ATP = 5-amino-1-(5-phospho-beta-D-ribosyl)imidazole + ADP + phosphate + H(+). It participates in purine metabolism; IMP biosynthesis via de novo pathway; 5-amino-1-(5-phospho-D-ribosyl)imidazole from N(2)-formyl-N(1)-(5-phospho-D-ribosyl)glycinamide: step 2/2. The sequence is that of Phosphoribosylformylglycinamidine cyclo-ligase from Xanthomonas campestris pv. campestris (strain B100).